The chain runs to 219 residues: UPF0502 protein Swoo_2055 (219 aa).

The disordered stretch occupies residues 167–195; that stretch reads QVKGESVPISEHSRSQREAPSKRQDEMDE. The segment covering 177–191 has biased composition (basic and acidic residues); it reads EHSRSQREAPSKRQD.

Belongs to the UPF0502 family.

This chain is UPF0502 protein Swoo_2055, found in Shewanella woodyi (strain ATCC 51908 / MS32).